We begin with the raw amino-acid sequence, 501 residues long: MLPRIIPSVLSVVLLFSFLFFVTAVLLQFIRIDSPDLENEEVFHSAPYDIFIYSAFYYNKSKSLGDSSMVILMTADFEVLEKVKNLELLGINDTSRAMTSAELERVTIHDACKWIAMTATAKIVLNPSLLLVSLGGNHAPIPFEVVSSEPKPVVMCISPLFAAENWHNLLVSLHVYKIFGAHMHLYIRSIVSPMLEILRVYEQEGYATLKPWNRINLLNRDEQDFNPNLNVEFRSQAAAQTDCLLRYKESSEFVAFVDLDDLIIPRVADNYASEFRYLASEHPTVAYFTYSKENTRIKAYKRANVFSIEHVLRNIKHEQQTETGKMIAIPSKINNTWIHWPQKNLKKLAVKPEFNSITHLKHIELLDGLKSKNEEEPKYNPSTGLDNDKPLISNKNIKMIEKDFNRMSWKSSVRRHLRNLPINMTYSKLISDCYKQSYYAFHSANENHGMLCPGPERCDISNHKTRCWISVGEYHSTRDGKLINVHFAENADFALNDGCQV.

The chain crosses the membrane as a helical span at residues 10-30; it reads LSVVLLFSFLFFVTAVLLQFI. Residues 151-439 enclose the GT92 domain; that stretch reads KPVVMCISPL…ISDCYKQSYY (289 aa).

The protein belongs to the glycosyltransferase 92 family.

It localises to the membrane. The polypeptide is Glycosyltransferase family 92 protein F13G3.3 (Caenorhabditis elegans).